Consider the following 634-residue polypeptide: Probable potassium transport system protein Kup (634 aa).

12 consecutive transmembrane segments (helical) span residues 21–41 (LVIGAIGVVFGDIGTSPLYTL), 58–78 (VLGILSLVFWALMLVVTLKYV), 110–130 (MYVVGILGIFGASLFFGDGVI), 147–167 (APKLEPFVVPITLVVLSMLFL), 179–199 (AFGPITLLWFFALGAIGVYNM), 223–243 (WHAVFVLGAVVLAVTGGEALY), 258–278 (WQFVVLPMLTLTYLGQGALVL), 296–316 (ALYPMIVLATAATVIASQALI), 348–368 (IYVPAVNWCLLALVAVAVIGF), 377–397 (AYGVSVTGTMLITTVLMIIYA), 403–423 (VPAPLLWLFALVFLAVDCAFF), and 427–447 (IIKFLDGAWFPLLLGLILFTL).

The protein belongs to the HAK/KUP transporter (TC 2.A.72) family.

It localises to the cell inner membrane. It carries out the reaction K(+)(in) + H(+)(in) = K(+)(out) + H(+)(out). Transport of potassium into the cell. Likely operates as a K(+):H(+) symporter. This is Probable potassium transport system protein Kup from Xanthomonas axonopodis pv. citri (strain 306).